A 202-amino-acid chain; its full sequence is MRETMQLVPMVVEQSSRGERSFDIYSRLLRERIIFLNGEVDDTVSALVCAQLLFLEAENPKKPIHLYINSPGGMVTSGFAMYDTMRYIRAPVHTLCMGTARSMGSFLLMAGEPGTRAALPNASILIHQPSGGFQGQASDMLIHAEEIRQTKHRMTRLYAEHCGRSYEEFETAMDRDRFMTVQEALEWGLIDRILEVREDAAA.

The active-site Nucleophile is Ser-102. Residue His-127 is part of the active site.

The protein belongs to the peptidase S14 family. As to quaternary structure, fourteen ClpP subunits assemble into 2 heptameric rings which stack back to back to give a disk-like structure with a central cavity, resembling the structure of eukaryotic proteasomes.

It localises to the cytoplasm. The enzyme catalyses Hydrolysis of proteins to small peptides in the presence of ATP and magnesium. alpha-casein is the usual test substrate. In the absence of ATP, only oligopeptides shorter than five residues are hydrolyzed (such as succinyl-Leu-Tyr-|-NHMec, and Leu-Tyr-Leu-|-Tyr-Trp, in which cleavage of the -Tyr-|-Leu- and -Tyr-|-Trp bonds also occurs).. Functionally, cleaves peptides in various proteins in a process that requires ATP hydrolysis. Has a chymotrypsin-like activity. Plays a major role in the degradation of misfolded proteins. The sequence is that of ATP-dependent Clp protease proteolytic subunit 1 from Agrobacterium fabrum (strain C58 / ATCC 33970) (Agrobacterium tumefaciens (strain C58)).